The primary structure comprises 217 residues: Adenylate kinase (217 aa).

10 to 15 contacts ATP; that stretch reads GAGKGT. Residues 30–59 are NMP; the sequence is STGDMLRAAVKAGSPLGVKVKDIMASGQLV. AMP contacts are provided by residues T31, R36, 57 to 59, 85 to 88, and Q92; these read QLV and GFPR. Positions 122–159 are LID; that stretch reads GRRVHEASGRIYHVTHNPPKTEGVDDITGEPLVQRDDD. ATP contacts are provided by residues R123 and 132–133; that span reads IY. Positions 156 and 167 each coordinate AMP. ATP is bound at residue G202.

This sequence belongs to the adenylate kinase family. As to quaternary structure, monomer.

It localises to the cytoplasm. It carries out the reaction AMP + ATP = 2 ADP. The protein operates within purine metabolism; AMP biosynthesis via salvage pathway; AMP from ADP: step 1/1. Functionally, catalyzes the reversible transfer of the terminal phosphate group between ATP and AMP. Plays an important role in cellular energy homeostasis and in adenine nucleotide metabolism. This chain is Adenylate kinase, found in Teredinibacter turnerae (strain ATCC 39867 / T7901).